Here is a 538-residue protein sequence, read N- to C-terminus: Ribulokinase 1 (538 aa).

This sequence belongs to the ribulokinase family.

It carries out the reaction D-ribulose + ATP = D-ribulose 5-phosphate + ADP + H(+). The catalysed reaction is L-ribulose + ATP = L-ribulose 5-phosphate + ADP + H(+). The protein operates within carbohydrate degradation; L-arabinose degradation via L-ribulose; D-xylulose 5-phosphate from L-arabinose (bacterial route): step 2/3. In Staphylococcus saprophyticus subsp. saprophyticus (strain ATCC 15305 / DSM 20229 / NCIMB 8711 / NCTC 7292 / S-41), this protein is Ribulokinase 1.